Here is an 84-residue protein sequence, read N- to C-terminus: Beta-defensin 119 (84 aa).

The N-terminal stretch at 1-21 is a signal peptide; it reads MKLLYLFLAILLAIEEPVISG. 3 disulfides stabilise this stretch: Cys-28–Cys-55, Cys-35–Cys-49, and Cys-39–Cys-56.

This sequence belongs to the beta-defensin family.

The protein resides in the secreted. Functionally, has antibacterial activity. The protein is Beta-defensin 119 (DEFB119) of Gorilla gorilla gorilla (Western lowland gorilla).